We begin with the raw amino-acid sequence, 138 residues long: Type II secretion system protein I (138 aa).

Positions 1–6 are cleaved as a propeptide — leader sequence; it reads MKHQRG. N-methyltyrosine is present on Y7. A helical transmembrane segment spans residues 7 to 29; sequence YSLIEVIVAFALLALALTLLLGS.

It belongs to the GSP I family. Type II secretion is composed of four main components: the outer membrane complex, the inner membrane complex, the cytoplasmic secretion ATPase and the periplasm-spanning pseudopilus. Interacts with core component XpsG. Cleaved by prepilin peptidase. In terms of processing, methylated by prepilin peptidase at the amino group of the N-terminal tyrosine once the leader sequence is cleaved by prepilin peptidase.

The protein resides in the cell inner membrane. Component of the type II secretion system required for the energy-dependent secretion of extracellular factors such as proteases and toxins from the periplasm. Part of the pseudopilus tip complex that is critical for the recognition and binding of secretion substrates. This chain is Type II secretion system protein I (xpsI), found in Xanthomonas campestris pv. campestris (strain ATCC 33913 / DSM 3586 / NCPPB 528 / LMG 568 / P 25).